The sequence spans 167 residues: Outer envelope pore protein 21A, chloroplastic (167 aa).

Residues 1–21 (METSLRYATNSRSLKIHAKEK) lie on the Cytoplasmic side of the membrane. The beta stranded transmembrane segment at 22 to 31 (FPVNSKTRLQ) threads the bilayer. Residues 32 to 55 (LHGELDTGAGVPSYFCAMIRYFFH) lie on the Chloroplast intermembrane side of the membrane. The chain crosses the membrane as a beta stranded span at residues 56 to 65 (EASTNLGVGL). At 66-71 (HYDKRE) the chain is on the cytoplasmic side. Residues 72–81 (KLRCLVRGKK) form a beta stranded membrane-spanning segment. Residues 82-87 (KFPVIT) are Chloroplast intermembrane-facing. Residues 88–97 (DEVVTFNIKG) form a beta stranded membrane-spanning segment. Residues 98 to 110 (RCDFDQDLVQRNA) lie on the Cytoplasmic side of the membrane. Residues 111 to 120 (KGAAEFDWNI) form a beta stranded membrane-spanning segment. At 121–127 (WKFQKDQ) the chain is on the chloroplast intermembrane side. Residues 128 to 137 (DLRLRIGYEM) traverse the membrane as a beta stranded segment. At 138-142 (FEKVP) the chain is on the cytoplasmic side. The chain crosses the membrane as a beta stranded span at residues 143–152 (YMQIRENNWT). Over 153–158 (FNTNLK) the chain is Chloroplast intermembrane. A beta stranded transmembrane segment spans residues 159-167 (GKWNVRYDL).

Belongs to the plastid outer envelope porin OEP21 (TC 1.B.29) family.

The protein resides in the plastid. The protein localises to the etioplast membrane. It localises to the chloroplast outer membrane. Voltage-dependent rectifying anion channel that facilitates the translocation between chloroplast and cytoplasm of phosphorylated carbohydrates such as triosephosphate, 3-phosphoglycerate and inorganic phosphate (Pi) depending of ATP to triosephosphate ratio in the plastidial intermembrane space; in high triosephosphate/ATP conditions (e.g. photosynthesis), export of triosphosphate from chloroplast (outward rectifying channels), but in high ATP/triosephosphate conditions (e.g. dark phase), import of phosphosolutes (inward rectifying channels). The chain is Outer envelope pore protein 21A, chloroplastic (OEP21A) from Arabidopsis thaliana (Mouse-ear cress).